The primary structure comprises 610 residues: Dihydroxy-acid dehydratase (610 aa).

Asp-81 is a Mg(2+) binding site. Residue Cys-122 coordinates [2Fe-2S] cluster. Positions 123 and 124 each coordinate Mg(2+). Residue Lys-124 is modified to N6-carboxylysine. Position 193 (Cys-193) interacts with [2Fe-2S] cluster. Mg(2+) is bound at residue Glu-489. Ser-515 serves as the catalytic Proton acceptor.

The protein belongs to the IlvD/Edd family. As to quaternary structure, homodimer. It depends on [2Fe-2S] cluster as a cofactor. Mg(2+) serves as cofactor.

The catalysed reaction is (2R)-2,3-dihydroxy-3-methylbutanoate = 3-methyl-2-oxobutanoate + H2O. It catalyses the reaction (2R,3R)-2,3-dihydroxy-3-methylpentanoate = (S)-3-methyl-2-oxopentanoate + H2O. It participates in amino-acid biosynthesis; L-isoleucine biosynthesis; L-isoleucine from 2-oxobutanoate: step 3/4. Its pathway is amino-acid biosynthesis; L-valine biosynthesis; L-valine from pyruvate: step 3/4. Its function is as follows. Functions in the biosynthesis of branched-chain amino acids. Catalyzes the dehydration of (2R,3R)-2,3-dihydroxy-3-methylpentanoate (2,3-dihydroxy-3-methylvalerate) into 2-oxo-3-methylpentanoate (2-oxo-3-methylvalerate) and of (2R)-2,3-dihydroxy-3-methylbutanoate (2,3-dihydroxyisovalerate) into 2-oxo-3-methylbutanoate (2-oxoisovalerate), the penultimate precursor to L-isoleucine and L-valine, respectively. This chain is Dihydroxy-acid dehydratase, found in Xylella fastidiosa (strain 9a5c).